The following is a 379-amino-acid chain: Inactive deoxyhypusine synthase (379 aa).

The disordered stretch occupies residues 1–48 (MLASVPAPRPAKKDSAASRRKSASKSTGAAVKDGSSARVSASGAAESP). Low complexity predominate over residues 36–47 (SARVSASGAAES). NAD(+) is bound by residues 115–119 (SNMIS), 141–143 (SAG), Glu147, and Asp256. 146-147 (EE) lines the spermidine pocket. Asp261 provides a ligand contact to spermidine. Gly302 is an NAD(+) binding site. His307 provides a ligand contact to spermidine. Residue 323–324 (TG) coordinates NAD(+). Residues 329–331 (GCV) and 338–344 (DDVACGL) each bind spermidine. Residue 357-358 (DA) participates in NAD(+) binding.

This sequence belongs to the deoxyhypusine synthase family.

This is Inactive deoxyhypusine synthase from Leishmania donovani.